Consider the following 299-residue polypeptide: CCR4-NOT transcription complex subunit 9 (299 aa).

At methionine 1 the chain carries N-acetylmethionine.

Belongs to the CNOT9 family. In terms of assembly, homodimer. Component of the CCR4-NOT complex; distinct complexes seem to exist that differ in the participation of probably mutually exclusive catalytic subunits. Interacts with MYB, ATF2, RARA, RARB, RARG, RXRA, RXRB and RXRG. Identified in a complex with ATF2 bound to target DNA. Interacts with NANOS2. Directly interacts with ZNF335.

It localises to the nucleus. The protein resides in the cytoplasm. The protein localises to the P-body. Component of the CCR4-NOT complex which is one of the major cellular mRNA deadenylases and is linked to various cellular processes including bulk mRNA degradation, miRNA-mediated repression, translational repression during translational initiation and general transcription regulation. Additional complex functions may be a consequence of its influence on mRNA expression. Involved in down-regulation of MYB- and JUN-dependent transcription. Enhances ligand-dependent transcriptional activity of nuclear hormone receptors. May play a role in cell differentiation. The polypeptide is CCR4-NOT transcription complex subunit 9 (Bos taurus (Bovine)).